Consider the following 122-residue polypeptide: Protein GL2-INTERACTING REPRESSOR 1 (122 aa).

A compositionally biased stretch (basic and acidic residues) spans 1 to 10 (MSRRSPKLEL). The tract at residues 1–62 (MSRRSPKLEL…PSVRYSTSPE (62 aa)) is disordered. Residues 7–12 (KLELKL) carry the EAR motif. The segment covering 27 to 46 (SPSRSATTSPTSPPSSCVSS) has biased composition (low complexity). A compositionally biased stretch (polar residues) spans 47–62 (EMNQDEPSVRYSTSPE).

In terms of assembly, interacts with GL2. Interacts with TPL. Expressed in root and shoot meristems.

It is found in the nucleus. In terms of biological role, acts as a negative regulator of root hair development redundantly with GIR2. GIR1 and GIR2 may function as adapter proteins that associate with GL2 and participate in the control of root hair formation. GIR1 and GIR2 may function as adapter proteins that associate with TPL and participate in the repression of root gene expression. The sequence is that of Protein GL2-INTERACTING REPRESSOR 1 from Arabidopsis thaliana (Mouse-ear cress).